The sequence spans 206 residues: Ribonuclease HII (206 aa).

The RNase H type-2 domain occupies 18 to 206; it reads LRIAGVDEVG…PVHNILYQEK (189 aa). A divalent metal cation contacts are provided by Asp-24, Glu-25, and Asp-115.

Belongs to the RNase HII family. The cofactor is Mn(2+). It depends on Mg(2+) as a cofactor.

Its subcellular location is the cytoplasm. It catalyses the reaction Endonucleolytic cleavage to 5'-phosphomonoester.. Endonuclease that specifically degrades the RNA of RNA-DNA hybrids. This is Ribonuclease HII from Dinoroseobacter shibae (strain DSM 16493 / NCIMB 14021 / DFL 12).